Reading from the N-terminus, the 212-residue chain is MQLFPLCLIISCSCPTVQASKLCLGWLWGMDIDPYKEFGASVELLSFLPSDFFPSIRDLLDTASALYREALESPEHCSPHHTALRQAILCWGELMNLATWVGSNLEDPASRELVVSYVNVNMGLKIRQLLWFHISCLTFGRETVLEYLVSFGVWIRTPPAYRPPNAPILSTLPETTVVRRRGRSPRRRTPSPRRRRSQSPRRRRSQSRESQC.

The first 19 residues, 1 to 19, serve as a signal peptide directing secretion; the sequence is MQLFPLCLIISCSCPTVQA. An HBEAG region spans residues 25 to 27; that stretch reads GWL. Positions 165–212 are disordered; that stretch reads NAPILSTLPETTVVRRRGRSPRRRTPSPRRRRSQSPRRRRSQSRESQC. Residues 178 to 205 are compositionally biased toward basic residues; sequence VRRRGRSPRRRTPSPRRRRSQSPRRRRS. The stretch at 184–190 is one 1; half-length repeat; the sequence is SPRRRTP. The 3 X 8 AA repeats of S-P-R-R-R-R-S-Q stretch occupies residues 184 to 206; that stretch reads SPRRRTPSPRRRRSQSPRRRRSQ. 2 tandem repeats follow at residues 191-198 and 199-206.

It belongs to the orthohepadnavirus precore antigen family. In terms of assembly, homodimerizes. In terms of processing, phosphorylated. Post-translationally, cleaved by host furin.

The protein resides in the secreted. It is found in the host nucleus. In terms of biological role, may regulate immune response to the intracellular capsid in acting as a T-cell tolerogen, by having an immunoregulatory effect which prevents destruction of infected cells by cytotoxic T-cells. This immune regulation may predispose to chronicity during perinatal infections and prevent severe liver injury during adult infections. In Hepatitis B virus genotype C subtype ayr (isolate Human/Japan/Okamoto/-) (HBV-C), this protein is External core antigen.